The following is a 102-amino-acid chain: Co-chaperonin GroES (102 aa).

This sequence belongs to the GroES chaperonin family. As to quaternary structure, heptamer of 7 subunits arranged in a ring. Interacts with the chaperonin GroEL.

The protein localises to the cytoplasm. Functionally, together with the chaperonin GroEL, plays an essential role in assisting protein folding. The GroEL-GroES system forms a nano-cage that allows encapsulation of the non-native substrate proteins and provides a physical environment optimized to promote and accelerate protein folding. GroES binds to the apical surface of the GroEL ring, thereby capping the opening of the GroEL channel. The sequence is that of Co-chaperonin GroES from Chlamydia trachomatis serovar L2 (strain ATCC VR-902B / DSM 19102 / 434/Bu).